The chain runs to 451 residues: Protein tweety homolog 1-B (451 aa).

Residues 1–43 (MSTSHGYRASWWTYILHQVPHTNFQFEVVDNQFAPQEWSYQQA) lie on the Extracellular side of the membrane. The helical transmembrane segment at 44-64 (LLFLASIAGLCLAISLVLICV) threads the bilayer. Residues 65-86 (YLIKFCCCASQEDDDSKSHRVC) are Cytoplasmic-facing. A helical membrane pass occupies residues 87-107 (CVTWSCVAAVIICCAGIGIGF). Residues 108 to 214 (YGNSETNDGV…QVNFIEDYRW (107 aa)) lie on the Extracellular side of the membrane. An N-linked (GlcNAc...) asparagine glycan is attached at Asn-128. A helical transmembrane segment spans residues 215 to 235 (LAYILLLLLDLIICLFTLLSL). Residues 236–240 (AKQIK) are Cytoplasmic-facing. The helical transmembrane segment at 241–261 (WLVIVMTVVSFFVLLLSWGSM) threads the bilayer. At 262–390 (GLEMATAVGL…LKGLCYDGME (129 aa)) the chain is on the extracellular side. Cystine bridges form between Cys-275–Cys-385 and Cys-303–Cys-370. N-linked (GlcNAc...) asparagine glycosylation is found at Asn-284 and Asn-355. The chain crosses the membrane as a helical span at residues 391–411 (GILFLLLFSFLSALSFTAAVC). Over 412-451 (SLPRAWKRFRNRDLDYDDMDEDDPFNPQESKRFVQWQSSI) the chain is Cytoplasmic.

This sequence belongs to the tweety family. Homotetramer; disulfide-linked. Homodimer.

The protein resides in the cell membrane. The enzyme catalyses chloride(in) = chloride(out). It carries out the reaction L-glutamate(out) = L-glutamate(in). Functionally, may act as a calcium-independent, swelling-dependent volume-regulated anion channel (VRAC-swell) which plays a pivotal role in the process of regulatory volume decrease (RVD) in the brain through the efflux of anions like chloride and organic osmolytes like glutamate. The chain is Protein tweety homolog 1-B (ttyh1-b) from Xenopus laevis (African clawed frog).